The chain runs to 319 residues: Free fatty acid receptor 3 (319 aa).

The Extracellular portion of the chain corresponds to 1–15 (MGTSFFLGNYWLFFS). Residues 16–36 (VYLLVFLVGLPLNVMALVVFV) traverse the membrane as a helical segment. At 37 to 43 (GKLRRRP) the chain is on the cytoplasmic side. Residues 44-64 (VAVDLLLLNLTISDLLLLLFL) form a helical membrane-spanning segment. Topologically, residues 65–98 (PFRMVEAACGMRWLLPFIFCPLSGFLFFTTIYLT) are extracellular. Cys-84 and Cys-165 are oxidised to a cystine. A helical membrane pass occupies residues 99 to 119 (SLFLTAVSIERFLSVAYPLWY). Topologically, residues 120–127 (KTRPRLAQ) are cytoplasmic. The chain crosses the membrane as a helical span at residues 128-148 (AGLVSVVCWFLASAHCSVVYI). At 149-183 (TEYWGNATYSQGTNGTCYLEFREDQLAILLPVRLE) the chain is on the extracellular side. N-linked (GlcNAc...) asparagine glycosylation is found at Asn-154 and Asn-162. The chain crosses the membrane as a helical span at residues 184–206 (MAVVLFMVPLCITSYCYSRLVWI). Residues 207–218 (LSRGASRRRRKR) lie on the Cytoplasmic side of the membrane. Residues 219-239 (IMGLLAATLLIFFVCFGPYNM) form a helical membrane-spanning segment. Residues 240–254 (SHVVGYVSRESPSWR) lie on the Extracellular side of the membrane. A helical membrane pass occupies residues 255–275 (SYVLLLSTLNSCIDPLVFYFS). The Cytoplasmic segment spans residues 276-319 (SSKFQADFHQLLGRLLRTCVPWTQQVSLELKVKNGEEPSKECPS).

The protein belongs to the G-protein coupled receptor 1 family. In terms of tissue distribution, expressed in white adipose tissue and skeletal muscle (at protein level). Abundantly expressed in sympathetic ganglia such as the superior cervical ganglion. Also expressed by intestinal endocrine cells.

It localises to the cell membrane. Its function is as follows. G protein-coupled receptor that is activated by a major product of dietary fiber digestion, the short chain fatty acids (SCFAs), and that plays a role in the regulation of whole-body energy homeostasis and in intestinal immunity. In omnivorous mammals, the short chain fatty acids acetate, propionate and butyrate are produced primarily by the gut microbiome that metabolizes dietary fibers. SCFAs serve as a source of energy but also act as signaling molecules. That G protein-coupled receptor is probably coupled to the pertussis toxin-sensitive, G(i/o)-alpha family of G proteins. Its activation results in the formation of inositol 1,4,5-trisphosphate, the mobilization of intracellular calcium, the phosphorylation of the MAPK3/ERK1 and MAPK1/ERK2 kinases and the inhibition of intracellular cAMP accumulation. Activated by SCFAs and by beta-hydroxybutyrate, a ketone body produced by the liver upon starvation, it inhibits N-type calcium channels and modulates the activity of sympathetic neurons through a signaling cascade involving the beta and gamma subunits of its coupled G protein, phospholipase C and MAP kinases. Thereby, it may regulate energy expenditure through the control of the sympathetic nervous system that controls for instance heart rate. Upon activation by SCFAs accumulating in the intestine, it may also signal to the brain via neural circuits which in turn would regulate intestinal gluconeogenesis. May also control the production of hormones involved in whole-body energy homeostasis. May for instance, regulate blood pressure through renin secretion. May also regulate secretion of the PYY peptide by enteroendocrine cells and control gut motility, intestinal transit rate, and the harvesting of energy from SCFAs produced by gut microbiota. May also indirectly regulate the production of LEP/Leptin, a hormone acting on the CNS to inhibit food intake, in response to the presence of short-chain fatty acids in the intestine. Finally, may also play a role in glucose homeostasis. Besides its role in energy homeostasis, may play a role in intestinal immunity. May mediate the activation of the inflammatory and immune response by SCFAs in the gut, regulating the rapid production of chemokines and cytokines by intestinal epithelial cells. Exhibits an SCFA-independent constitutive G protein-coupled receptor activity. The sequence is that of Free fatty acid receptor 3 (Ffar3) from Mus musculus (Mouse).